The following is a 538-amino-acid chain: Nicotinate phosphoribosyltransferase (538 aa).

Residues Tyr21 and Thr210 each contribute to the nicotinate site. Phosphohistidine is present on His213. Arg318 provides a ligand contact to nicotinate. Thr380 lines the 5-phospho-alpha-D-ribose 1-diphosphate pocket.

It belongs to the NAPRTase family. In terms of assembly, homodimer. The cofactor is Mg(2+). Mn(2+) is required as a cofactor. Post-translationally, transiently phosphorylated on a His residue during the reaction cycle. Phosphorylation strongly increases the affinity for substrates and increases the rate of nicotinate D-ribonucleotide production. Dephosphorylation regenerates the low-affinity form of the enzyme, leading to product release.

It localises to the cytoplasm. It is found in the cytosol. It carries out the reaction nicotinate + 5-phospho-alpha-D-ribose 1-diphosphate + ATP + H2O = nicotinate beta-D-ribonucleotide + ADP + phosphate + diphosphate. Its pathway is cofactor biosynthesis; NAD(+) biosynthesis; nicotinate D-ribonucleotide from nicotinate: step 1/1. Catalyzes the first step in the biosynthesis of NAD from nicotinic acid, the ATP-dependent synthesis of beta-nicotinate D-ribonucleotide from nicotinate and 5-phospho-D-ribose 1-phosphate. Helps prevent cellular oxidative stress via its role in NAD biosynthesis. In Rattus norvegicus (Rat), this protein is Nicotinate phosphoribosyltransferase (Naprt).